Here is a 350-residue protein sequence, read N- to C-terminus: Small-conductance mechanosensitive channel MscMJ (350 aa).

A run of 5 helical transmembrane segments spans residues Ile-10–Val-30, Leu-59–Leu-79, Val-91–Phe-111, Ile-130–Ala-150, and Val-154–Leu-174.

The protein belongs to the MscS (TC 1.A.23) family.

It localises to the cell membrane. Functionally, small-conductance mechanosensitive channel that opens in response to stretch forces in the membrane lipid bilayer. Exhibits a sixfold preference for cations over anions. Non-rectifying. This Methanocaldococcus jannaschii (strain ATCC 43067 / DSM 2661 / JAL-1 / JCM 10045 / NBRC 100440) (Methanococcus jannaschii) protein is Small-conductance mechanosensitive channel MscMJ.